We begin with the raw amino-acid sequence, 299 residues long: Type II restriction enzyme BglI (299 aa).

Mg(2+) contacts are provided by aspartate 116, aspartate 142, and isoleucine 143.

In terms of assembly, homodimer. Requires Mg(2+) as cofactor.

It catalyses the reaction Endonucleolytic cleavage of DNA to give specific double-stranded fragments with terminal 5'-phosphates.. A P subtype restriction enzyme that recognizes the double-stranded sequence 5'-GCCNNNNNGGC-3' and cleaves before N-8. The polypeptide is Type II restriction enzyme BglI (bglIR) (Bacillus subtilis).